Consider the following 218-residue polypeptide: Probable transaldolase (218 aa).

Lysine 84 serves as the catalytic Schiff-base intermediate with substrate.

Belongs to the transaldolase family. Type 3B subfamily.

It is found in the cytoplasm. The catalysed reaction is D-sedoheptulose 7-phosphate + D-glyceraldehyde 3-phosphate = D-erythrose 4-phosphate + beta-D-fructose 6-phosphate. It functions in the pathway carbohydrate degradation; pentose phosphate pathway; D-glyceraldehyde 3-phosphate and beta-D-fructose 6-phosphate from D-ribose 5-phosphate and D-xylulose 5-phosphate (non-oxidative stage): step 2/3. In terms of biological role, transaldolase is important for the balance of metabolites in the pentose-phosphate pathway. In Bartonella henselae (strain ATCC 49882 / DSM 28221 / CCUG 30454 / Houston 1) (Rochalimaea henselae), this protein is Probable transaldolase.